Consider the following 237-residue polypeptide: Phosphoribosylaminoimidazole-succinocarboxamide synthase (237 aa).

This sequence belongs to the SAICAR synthetase family.

The catalysed reaction is 5-amino-1-(5-phospho-D-ribosyl)imidazole-4-carboxylate + L-aspartate + ATP = (2S)-2-[5-amino-1-(5-phospho-beta-D-ribosyl)imidazole-4-carboxamido]succinate + ADP + phosphate + 2 H(+). The protein operates within purine metabolism; IMP biosynthesis via de novo pathway; 5-amino-1-(5-phospho-D-ribosyl)imidazole-4-carboxamide from 5-amino-1-(5-phospho-D-ribosyl)imidazole-4-carboxylate: step 1/2. The protein is Phosphoribosylaminoimidazole-succinocarboxamide synthase of Erwinia tasmaniensis (strain DSM 17950 / CFBP 7177 / CIP 109463 / NCPPB 4357 / Et1/99).